The primary structure comprises 474 residues: MPVSIGKIVRVVGPTVDVKFEDGTLPKIENALTCDNNGKILYLEVAQQLGDGIVRAVAMDSTDGLTRDKVVKDTGKPICVPVGRQTLGRIFNVVGEIIDGGGPVPEPNKVSSIYAEPPRFDMQSTSSEILETGIKVIDLLAPYSKGGKVGLFGGAGVGKTVLIMELINNIAKAYGGFSVFAGVGERTREGNDLYSEMVESGVIDKEHPEKSKVVLVYGQMNEPPGARAKVAMSALTMAEYFRDKEGQDVLFFVDNIFRFTQAGAELSTLLGRIPSAVGYQPTLATDMGRLQERITSTKNGSITSVQAIYVPADDITDPAPATSFAHLDSTTVLSRQVAEAGIYPAVDALASSAQILSPEVLGQEHYEVAQKVKGILQSYKSLQDIIAILGMEELSEEDKLTVYRARKIEKFLSQPFHVAEVFTGQPGKFVSLKDTIAGFKELVEGKCDDMPEAAFYMVGNMNEAREKAISLREK.

An ATP-binding site is contributed by 153 to 160 (GGAGVGKT).

The protein belongs to the ATPase alpha/beta chains family. In terms of assembly, F-type ATPases have 2 components, CF(1) - the catalytic core - and CF(0) - the membrane proton channel. CF(1) has five subunits: alpha(3), beta(3), gamma(1), delta(1), epsilon(1). CF(0) has three main subunits: a(1), b(2) and c(9-12). The alpha and beta chains form an alternating ring which encloses part of the gamma chain. CF(1) is attached to CF(0) by a central stalk formed by the gamma and epsilon chains, while a peripheral stalk is formed by the delta and b chains.

It localises to the cell inner membrane. It carries out the reaction ATP + H2O + 4 H(+)(in) = ADP + phosphate + 5 H(+)(out). Its function is as follows. Produces ATP from ADP in the presence of a proton gradient across the membrane. The catalytic sites are hosted primarily by the beta subunits. The sequence is that of ATP synthase subunit beta from Neorickettsia sennetsu (strain ATCC VR-367 / Miyayama) (Ehrlichia sennetsu).